The chain runs to 377 residues: Chaperone protein DnaJ (377 aa).

One can recognise a J domain in the interval 5–70 (DYYQVLGVSR…KKRSAYDQLG (66 aa)). The CR-type zinc finger occupies 138–216 (GVTKIISFKT…CYGEGRYINT (79 aa)). Residues Cys-151, Cys-154, Cys-168, Cys-171, Cys-190, Cys-193, Cys-204, and Cys-207 each coordinate Zn(2+). CXXCXGXG motif repeat units lie at residues 151 to 158 (CEACTGKG), 168 to 175 (CPTCRGSG), 190 to 197 (CQTCRGAG), and 204 to 211 (CTKCYGEG).

The protein belongs to the DnaJ family. Homodimer. The cofactor is Zn(2+).

Its subcellular location is the cytoplasm. In terms of biological role, participates actively in the response to hyperosmotic and heat shock by preventing the aggregation of stress-denatured proteins and by disaggregating proteins, also in an autonomous, DnaK-independent fashion. Unfolded proteins bind initially to DnaJ; upon interaction with the DnaJ-bound protein, DnaK hydrolyzes its bound ATP, resulting in the formation of a stable complex. GrpE releases ADP from DnaK; ATP binding to DnaK triggers the release of the substrate protein, thus completing the reaction cycle. Several rounds of ATP-dependent interactions between DnaJ, DnaK and GrpE are required for fully efficient folding. Also involved, together with DnaK and GrpE, in the DNA replication of plasmids through activation of initiation proteins. The chain is Chaperone protein DnaJ from Orientia tsutsugamushi (strain Ikeda) (Rickettsia tsutsugamushi).